The primary structure comprises 392 residues: Putative RNA-binding protein Luc7-like 2 (392 aa).

At Ser18 the chain carries Phosphoserine. Positions 102–177 (EVAKKRLAET…EAEEVYRNSM (76 aa)) form a coiled coil. Basic and acidic residues predominate over residues 235–257 (KQEKRNQERLKRREEREREEREK). The disordered stretch occupies residues 235-392 (KQEKRNQERL…SSEEREAGEI (158 aa)). Basic residues predominate over residues 258–321 (LRRSRSHSKN…RSRSHQRSRH (64 aa)). 5-hydroxylysine; by JMJD6 occurs at positions 266 and 269. Basic and acidic residues-rich tracts occupy residues 337-364 (KERF…DRDR) and 377-392 (RSED…AGEI).

It belongs to the Luc7 family. As to quaternary structure, interacts with SCNM1.

The protein localises to the nucleus speckle. The protein resides in the nucleus. It localises to the nucleoplasm. May bind to RNA via its Arg/Ser-rich domain. The chain is Putative RNA-binding protein Luc7-like 2 (LUC7L2) from Homo sapiens (Human).